We begin with the raw amino-acid sequence, 153 residues long: 3-hydroxyacyl-[acyl-carrier-protein] dehydratase FabZ (153 aa).

His-54 is a catalytic residue.

The protein belongs to the thioester dehydratase family. FabZ subfamily.

It is found in the cytoplasm. It carries out the reaction a (3R)-hydroxyacyl-[ACP] = a (2E)-enoyl-[ACP] + H2O. In terms of biological role, involved in unsaturated fatty acids biosynthesis. Catalyzes the dehydration of short chain beta-hydroxyacyl-ACPs and long chain saturated and unsaturated beta-hydroxyacyl-ACPs. The chain is 3-hydroxyacyl-[acyl-carrier-protein] dehydratase FabZ from Chlamydia pneumoniae (Chlamydophila pneumoniae).